Reading from the N-terminus, the 430-residue chain is 3-phosphoshikimate 1-carboxyvinyltransferase (430 aa).

3-phosphoshikimate contacts are provided by K21, S22, and R26. K21 is a phosphoenolpyruvate binding site. Residues G95 and R123 each coordinate phosphoenolpyruvate. 3-phosphoshikimate-binding residues include T167, Q169, D315, and K342. Q169 lines the phosphoenolpyruvate pocket. The Proton acceptor role is filled by D315. Phosphoenolpyruvate is bound by residues R346 and R390.

This sequence belongs to the EPSP synthase family. In terms of assembly, monomer.

The protein localises to the cytoplasm. It catalyses the reaction 3-phosphoshikimate + phosphoenolpyruvate = 5-O-(1-carboxyvinyl)-3-phosphoshikimate + phosphate. The protein operates within metabolic intermediate biosynthesis; chorismate biosynthesis; chorismate from D-erythrose 4-phosphate and phosphoenolpyruvate: step 6/7. Catalyzes the transfer of the enolpyruvyl moiety of phosphoenolpyruvate (PEP) to the 5-hydroxyl of shikimate-3-phosphate (S3P) to produce enolpyruvyl shikimate-3-phosphate and inorganic phosphate. This chain is 3-phosphoshikimate 1-carboxyvinyltransferase, found in Endomicrobium trichonymphae.